Consider the following 367-residue polypeptide: Glycolate oxidase 3 (367 aa).

Positions 1-360 (MELITNVSEY…TRNHVITDSD (360 aa)) constitute an FMN hydroxy acid dehydrogenase domain. Tyrosine 25 contacts glyoxylate. FMN is bound by residues 78 to 80 (PSA), serine 107, 128 to 130 (QLY), and threonine 156. Tyrosine 130 contacts glyoxylate. Arginine 165 provides a ligand contact to glyoxylate. Positions 231 and 253 each coordinate FMN. Positions 255 and 258 each coordinate glyoxylate. Histidine 255 acts as the Proton acceptor in catalysis. FMN is bound by residues 286–290 (DGGVR) and 309–310 (GR). The Microbody targeting signal signature appears at 365–367 (SRL).

It belongs to the FMN-dependent alpha-hydroxy acid dehydrogenase family. In terms of assembly, homotetramer. The cofactor is FMN.

The protein localises to the peroxisome. The enzyme catalyses glycolate + O2 = glyoxylate + H2O2. The protein operates within photosynthesis; photorespiration; glycine from 2-phosphoglycolate: step 2/3. Catalyzes the oxidation of glycolate to glyoxylate, with a reduction of O2 to H2O2. Is a key enzyme in photorespiration in green plants. The sequence is that of Glycolate oxidase 3 (GLO3) from Oryza sativa subsp. indica (Rice).